The primary structure comprises 408 residues: NADH-quinone oxidoreductase subunit D (408 aa).

This sequence belongs to the complex I 49 kDa subunit family. NDH-1 is composed of 14 different subunits. Subunits NuoB, C, D, E, F, and G constitute the peripheral sector of the complex.

The protein resides in the cell inner membrane. It catalyses the reaction a quinone + NADH + 5 H(+)(in) = a quinol + NAD(+) + 4 H(+)(out). NDH-1 shuttles electrons from NADH, via FMN and iron-sulfur (Fe-S) centers, to quinones in the respiratory chain. The immediate electron acceptor for the enzyme in this species is believed to be ubiquinone. Couples the redox reaction to proton translocation (for every two electrons transferred, four hydrogen ions are translocated across the cytoplasmic membrane), and thus conserves the redox energy in a proton gradient. The polypeptide is NADH-quinone oxidoreductase subunit D (Campylobacter jejuni subsp. jejuni serotype O:6 (strain 81116 / NCTC 11828)).